The sequence spans 207 residues: NADH-quinone oxidoreductase subunit C (207 aa).

This sequence belongs to the complex I 30 kDa subunit family. In terms of assembly, NDH-1 is composed of 14 different subunits. Subunits NuoB, C, D, E, F, and G constitute the peripheral sector of the complex.

Its subcellular location is the cell inner membrane. The enzyme catalyses a quinone + NADH + 5 H(+)(in) = a quinol + NAD(+) + 4 H(+)(out). NDH-1 shuttles electrons from NADH, via FMN and iron-sulfur (Fe-S) centers, to quinones in the respiratory chain. The immediate electron acceptor for the enzyme in this species is believed to be ubiquinone. Couples the redox reaction to proton translocation (for every two electrons transferred, four hydrogen ions are translocated across the cytoplasmic membrane), and thus conserves the redox energy in a proton gradient. This Jannaschia sp. (strain CCS1) protein is NADH-quinone oxidoreductase subunit C.